The sequence spans 238 residues: Probable transcriptional regulatory protein CAB166 (238 aa).

Belongs to the TACO1 family.

The protein resides in the cytoplasm. This chain is Probable transcriptional regulatory protein CAB166, found in Chlamydia abortus (strain DSM 27085 / S26/3) (Chlamydophila abortus).